A 60-amino-acid chain; its full sequence is Large ribosomal subunit protein uL30 (60 aa).

It belongs to the universal ribosomal protein uL30 family. Part of the 50S ribosomal subunit.

The chain is Large ribosomal subunit protein uL30 from Limosilactobacillus fermentum (strain NBRC 3956 / LMG 18251) (Lactobacillus fermentum).